A 305-amino-acid polypeptide reads, in one-letter code: Fructose-bisphosphate aldolase (305 aa).

A D-glyceraldehyde 3-phosphate-binding site is contributed by Ser-49. Asp-80 serves as the catalytic Proton donor. Residues His-81, Asp-102, Glu-132, and His-178 each coordinate Zn(2+). Gly-179 provides a ligand contact to dihydroxyacetone phosphate. His-208 is a binding site for Zn(2+). Dihydroxyacetone phosphate-binding positions include 209–211 (GAS) and 251–254 (NTDT).

The protein belongs to the class II fructose-bisphosphate aldolase family. As to quaternary structure, homotetramer. It depends on Zn(2+) as a cofactor.

It catalyses the reaction beta-D-fructose 1,6-bisphosphate = D-glyceraldehyde 3-phosphate + dihydroxyacetone phosphate. The protein operates within carbohydrate degradation; glycolysis; D-glyceraldehyde 3-phosphate and glycerone phosphate from D-glucose: step 4/4. Functionally, catalyzes the aldol condensation of dihydroxyacetone phosphate (DHAP or glycerone-phosphate) with glyceraldehyde 3-phosphate (G3P) to form fructose 1,6-bisphosphate (FBP) in gluconeogenesis and the reverse reaction in glycolysis. This Thermus caldophilus protein is Fructose-bisphosphate aldolase.